The primary structure comprises 133 residues: Large ribosomal subunit protein uL15 (133 aa).

Residues 1–57 (MALEKLTPAAGSTHATKRIGRGQGSGNGKTAGKGNKGQRARKGYNEKRGFEGGQQPL) are disordered. Residues 21–35 (RGQGSGNGKTAGKGN) are compositionally biased toward gly residues.

It belongs to the universal ribosomal protein uL15 family. As to quaternary structure, part of the 50S ribosomal subunit.

Binds to the 23S rRNA. The sequence is that of Large ribosomal subunit protein uL15 from Campylobacter concisus (strain 13826).